Here is a 224-residue protein sequence, read N- to C-terminus: Putative carbamate hydrolase RutD (224 aa).

Residues 14 to 115 (PVVVLISGLG…TVLVSVNGWL (102 aa)) enclose the AB hydrolase-1 domain.

This sequence belongs to the AB hydrolase superfamily. Hydrolase RutD family.

It carries out the reaction carbamate + 2 H(+) = NH4(+) + CO2. Functionally, involved in pyrimidine catabolism. May facilitate the hydrolysis of carbamate, a reaction that can also occur spontaneously. This is Putative carbamate hydrolase RutD from Shigella dysenteriae serotype 1 (strain Sd197).